The primary structure comprises 455 residues: UPF0210 protein Teth514_2074 (455 aa).

The protein belongs to the UPF0210 family. As to quaternary structure, homodimer.

The chain is UPF0210 protein Teth514_2074 from Thermoanaerobacter sp. (strain X514).